Reading from the N-terminus, the 214-residue chain is Nodulation protein A (214 aa).

It belongs to the NodA family.

It localises to the cytoplasm. Functionally, N-acyltransferase required for nodulation. Acts in the production of a small, heat-stable compound (Nod) that stimulates mitosis in various plant protoplasts. The sequence is that of Nodulation protein A from Methylobacterium nodulans (strain LMG 21967 / CNCM I-2342 / ORS 2060).